A 408-amino-acid chain; its full sequence is uncharacterized protein (408 aa).

Residues 56-76 traverse the membrane as a helical segment; the sequence is YWAGPAAASMVAAVTPYVAWL.

Belongs to the mycobacterial PPE family.

The protein resides in the cell membrane. This is an uncharacterized protein from Mycobacterium bovis (strain ATCC BAA-935 / AF2122/97).